Here is a 239-residue protein sequence, read N- to C-terminus: Protein NtpR (239 aa).

Residues 12 to 239 enclose the Glutamine amidotransferase type-1 domain; the sequence is LIRATDTFQG…GLFDFFVQEF (228 aa). Cys113 (nucleophile) is an active-site residue. Active-site residues include His217 and Glu219.

The polypeptide is Protein NtpR (ntpR) (Enterococcus hirae (strain ATCC 9790 / DSM 20160 / JCM 8729 / LMG 6399 / NBRC 3181 / NCIMB 6459 / NCDO 1258 / NCTC 12367 / WDCM 00089 / R)).